We begin with the raw amino-acid sequence, 1088 residues long: RNA-directed RNA polymerase (1088 aa).

Residues 501–687 (LSYGDVTRFL…AKRYLAGGKI (187 aa)) enclose the RdRp catalytic domain.

This sequence belongs to the reoviridae RNA-directed RNA polymerase family. As to quaternary structure, interacts with VP3 (Potential). Interacts with VP2; this interaction activates VP1. Interacts with NSP5; this interaction is probably necessary for the formation of functional virus factories. Interacts with NSP2; this interaction is weak. It depends on Mg(2+) as a cofactor.

It localises to the virion. The enzyme catalyses RNA(n) + a ribonucleoside 5'-triphosphate = RNA(n+1) + diphosphate. RNA-directed RNA polymerase that is involved in both transcription and genome replication. Together with VP3 capping enzyme, forms an enzyme complex positioned near the channels situated at each of the five-fold vertices of the core. Following infection, the outermost layer of the virus is lost, leaving a double-layered particle (DLP) made up of the core and VP6 shell. VP1 then catalyzes the transcription of fully conservative plus-strand genomic RNAs that are extruded through the DLP's channels into the cytoplasm where they function as mRNAs for translation of viral proteins. One copy of each of the viral (+)RNAs is also recruited during core assembly, together with newly synthesized polymerase complexes and VP2. The polymerase of these novo-formed particles catalyzes the synthesis of complementary minus-strands leading to dsRNA formation. To do so, the polymerase specifically recognizes and binds 4 bases 5'-UGUG-3' in the conserved 3'-sequence of plus-strand RNA templates. VP2 presumably activates the autoinhibited VP1-RNA complex to coordinate packaging and genome replication. Once dsRNA synthesis is complete, the polymerase switches to the transcriptional mode, thus providing secondary transcription. This chain is RNA-directed RNA polymerase, found in Rotavirus A (strain RVA/Human/Japan/KU/1995/G1P1A[8]) (RV-A).